Here is a 693-residue protein sequence, read N- to C-terminus: Elongation factor G (693 aa).

Residues 8–282 form the tr-type G domain; it reads EHTRNIGIMA…AVIDFMPSPT (275 aa). Residues 17-24, 81-85, and 135-138 each bind GTP; these read AHIDAGKT, DTPGH, and NKMD.

It belongs to the TRAFAC class translation factor GTPase superfamily. Classic translation factor GTPase family. EF-G/EF-2 subfamily.

Its subcellular location is the cytoplasm. In terms of biological role, catalyzes the GTP-dependent ribosomal translocation step during translation elongation. During this step, the ribosome changes from the pre-translocational (PRE) to the post-translocational (POST) state as the newly formed A-site-bound peptidyl-tRNA and P-site-bound deacylated tRNA move to the P and E sites, respectively. Catalyzes the coordinated movement of the two tRNA molecules, the mRNA and conformational changes in the ribosome. The polypeptide is Elongation factor G (Ruminiclostridium cellulolyticum (strain ATCC 35319 / DSM 5812 / JCM 6584 / H10) (Clostridium cellulolyticum)).